Here is a 373-residue protein sequence, read N- to C-terminus: Polygalacturonase (373 aa).

The first 24 residues, Met-1–Arg-24, serve as a signal peptide directing secretion. A disulfide bond links Cys-27 and Cys-42. Residues Asn-65 and Asn-94 are each glycosylated (N-linked (GlcNAc...) asparagine). 8 PbH1 repeats span residues Thr-136–Gly-158, Ser-159–Ser-197, Ser-198–Ser-219, Gly-220–Ser-240, Val-249–Ser-270, Ile-278–Gln-300, Thr-312–Ala-333, and Cys-345–Asn-369. Asp-212 serves as the catalytic Proton donor. Residues Cys-214 and Cys-230 are joined by a disulfide bond. His-234 is a catalytic residue. Asn-280 and Asn-290 each carry an N-linked (GlcNAc...) asparagine glycan. Intrachain disulfides connect Cys-340/Cys-345 and Cys-364/Cys-371.

The protein belongs to the glycosyl hydrolase 28 family.

Its subcellular location is the secreted. It catalyses the reaction (1,4-alpha-D-galacturonosyl)n+m + H2O = (1,4-alpha-D-galacturonosyl)n + (1,4-alpha-D-galacturonosyl)m.. Involved in maceration and soft-rotting of plant tissue. Hydrolyzes the 1,4-alpha glycosidic bonds of de-esterified pectate in the smooth region of the plant cell wall. This is Polygalacturonase (PGA) from Fusarium fujikuroi (Bakanae and foot rot disease fungus).